Reading from the N-terminus, the 664-residue chain is Serine/threonine-protein kinase PrkC (664 aa).

The Cytoplasmic segment spans residues 1-348 (MIGKIINERY…PKPKKKSTRK (348 aa)). The Protein kinase domain maps to 10-271 (YKIVDKLGGG…EMKDDLSSVL (262 aa)). Residues 16–24 (LGGGGMSTV) and lysine 39 each bind ATP. Aspartate 133 functions as the Proton acceptor in the catalytic mechanism. A phosphothreonine; by autocatalysis mark is found at threonine 161, threonine 164, and threonine 166. The chain crosses the membrane as a helical span at residues 349–369 (IVLLSLIFSLLMIALVSFVAM). The Extracellular portion of the chain corresponds to 370-664 (AMFGNKYEET…AEKEVSYDDV (295 aa)). PASTA domains are found at residues 373–440 (GNKY…VISK), 441–509 (GPEK…YESL), and 510–575 (GIKQ…VVSK). Residues 541 to 565 (KEEYSDDIDEGDVISQSPKGKSVDE) are disordered. Over residues 554–565 (ISQSPKGKSVDE) the composition is skewed to polar residues.

The protein belongs to the protein kinase superfamily. Ser/Thr protein kinase family. In terms of assembly, homodimer.

Its subcellular location is the spore membrane. It carries out the reaction L-seryl-[protein] + ATP = O-phospho-L-seryl-[protein] + ADP + H(+). The catalysed reaction is L-threonyl-[protein] + ATP = O-phospho-L-threonyl-[protein] + ADP + H(+). Its function is as follows. Probable protein kinase that is responsible for triggering spore germination in response to muropeptides, signaling bacteria to exit dormancy. PrkC is thus a germination receptor that binds peptidoglycan fragments containing either m-Dpm (meso-diaminopimelate) or L-lys, which act as spore germinants. Probably autophosphorylates and phosphorylates FusA (EF-G, elongation factor G); the latter modification is likely necessary for germination in response to peptidoglycan. The chain is Serine/threonine-protein kinase PrkC (prkC) from Staphylococcus aureus (strain Newman).